The chain runs to 137 residues: Small ribosomal subunit protein uS11 (137 aa).

2 disordered regions span residues 1–32 and 118–137; these read MPPK…AHIK and ISDV…RRRV. Basic residues predominate over residues 12–21; sequence KTQKSRRRDK.

The protein belongs to the universal ribosomal protein uS11 family. As to quaternary structure, part of the 30S ribosomal subunit. Interacts with proteins S7 and S18. Binds to IF-3.

In terms of biological role, located on the platform of the 30S subunit, it bridges several disparate RNA helices of the 16S rRNA. Forms part of the Shine-Dalgarno cleft in the 70S ribosome. This is Small ribosomal subunit protein uS11 from Nocardia farcinica (strain IFM 10152).